The following is a 373-amino-acid chain: Transaldolase (373 aa).

The active-site Schiff-base intermediate with substrate is Lys-143.

Belongs to the transaldolase family. Type 2 subfamily.

Its subcellular location is the cytoplasm. It carries out the reaction D-sedoheptulose 7-phosphate + D-glyceraldehyde 3-phosphate = D-erythrose 4-phosphate + beta-D-fructose 6-phosphate. It participates in carbohydrate degradation; pentose phosphate pathway; D-glyceraldehyde 3-phosphate and beta-D-fructose 6-phosphate from D-ribose 5-phosphate and D-xylulose 5-phosphate (non-oxidative stage): step 2/3. Its function is as follows. Transaldolase is important for the balance of metabolites in the pentose-phosphate pathway. In Mycobacterium bovis (strain ATCC BAA-935 / AF2122/97), this protein is Transaldolase (tal).